Consider the following 893-residue polypeptide: Genome polyprotein 2 (893 aa).

Residues 109 to 229 enclose the Peptidase C6 domain; it reads TAEFKSGFCY…GCEYMLYPVG (121 aa). Active-site for helper component proteinase activity residues include Cys-117 and His-189. The segment at 502–539 is disordered; the sequence is WVTLNSGDDDDDQSGGGGGGPQTPGGQPPVPHTRGTHQ. The segment covering 515-524 has biased composition (gly residues); sequence SGGGGGGPQT.

It belongs to the bymoviruses polyprotein 2 family. The viral RNA2 of bymoviruses is expressed as a single polyprotein which undergoes post-translational proteolytic processing resulting in the production of at least two individual proteins. The HC-pro cleaves its C-terminus autocatalytically (Potential).

It catalyses the reaction Hydrolyzes a Gly-|-Gly bond at its own C-terminus, commonly in the sequence -Tyr-Xaa-Val-Gly-|-Gly, in the processing of the potyviral polyprotein.. The protein is Genome polyprotein 2 (RNA2) of Barley mild mosaic virus (strain ASL) (BaMMV).